We begin with the raw amino-acid sequence, 390 residues long: DNA polymerase IV (390 aa).

In terms of domain architecture, UmuC spans 6 to 187; the sequence is VMHVDLDAFF…LDISIMPGIG (182 aa). Asp10 and Asp105 together coordinate Mg(2+). Glu106 is a catalytic residue.

This sequence belongs to the DNA polymerase type-Y family. Monomer. Requires Mg(2+) as cofactor.

It localises to the cytoplasm. It catalyses the reaction DNA(n) + a 2'-deoxyribonucleoside 5'-triphosphate = DNA(n+1) + diphosphate. Its function is as follows. Poorly processive, error-prone DNA polymerase involved in untargeted mutagenesis. Copies undamaged DNA at stalled replication forks, which arise in vivo from mismatched or misaligned primer ends. These misaligned primers can be extended by PolIV. Exhibits no 3'-5' exonuclease (proofreading) activity. May be involved in translesional synthesis, in conjunction with the beta clamp from PolIII. This Dehalococcoides mccartyi (strain ATCC BAA-2266 / KCTC 15142 / 195) (Dehalococcoides ethenogenes (strain 195)) protein is DNA polymerase IV.